We begin with the raw amino-acid sequence, 1460 residues long: Nonribosomal peptide synthetase 6 (1460 aa).

The tract at residues 63–468 (EQAALHPEKI…GRQDQQVKLR (406 aa)) is adenylation. Positions 600–675 (EPTTEMEIKL…AMATKIKPLS (76 aa)) constitute a Carrier 1 domain. The residue at position 636 (serine 636) is an O-(pantetheine 4'-phosphoryl)serine. The tract at residues 712–1135 (VQDVYPCTPL…AVLDPSEAQD (424 aa)) is condensation. Carrier domains lie at 1168–1241 (SPNE…GNEK) and 1236–1312 (SIGN…EETD). O-(pantetheine 4'-phosphoryl)serine occurs at positions 1202 and 1273. Residues 1303-1324 (ELASSAEETDSPQTETNSNAPY) form a disordered region. Positions 1313-1322 (SPQTETNSNA) are enriched in polar residues.

This sequence belongs to the NRP synthetase family.

Its pathway is siderophore biosynthesis. In terms of biological role, NRPS involved in extracellular coprogen-type siderophores biosynthesis. The role of extracellular siderophores in fungal virulence to plants is to supply iron to the fungus during plant infection, but not to act as phytotoxins, depriving their hosts of iron. The sequence is that of Nonribosomal peptide synthetase 6 from Alternaria brassicicola (Dark leaf spot agent).